A 173-amino-acid chain; its full sequence is Inner membrane protein YbcI (173 aa).

Residues 1 to 12 (MPTVITHAAVPL) lie on the Cytoplasmic side of the membrane. Residues 13–35 (CIGLGLGSKVIPPRLLFAGIILA) form a helical membrane-spanning segment. Residues 36–54 (MLPDADVLSFKFGVAYGNV) are Periplasmic-facing. Residues 55 to 77 (FGHRGFTHSLVFAFVVPLLCVFI) form a helical membrane-spanning segment. Residues 78-83 (GRRWFR) are Cytoplasmic-facing. Residues 84 to 103 (AGLIRCWLFLTVSLLSHSLL) traverse the membrane as a helical segment. Over 104–147 (DSVTTGGKGVGWLWPWSDERFFAPWQVIKVAPFALSRYTTPYGH) the chain is Periplasmic. A helical membrane pass occupies residues 148-170 (QVIISELMWVWLPGMLLMGMLWW). Residues 171–173 (RRR) are Cytoplasmic-facing.

Its subcellular location is the cell inner membrane. The polypeptide is Inner membrane protein YbcI (ybcI) (Escherichia coli (strain K12)).